Consider the following 527-residue polypeptide: Bifunctional purine biosynthesis protein PurH (527 aa).

Positions 1–149 (MASDFLPVHR…KNFARVAVAT (149 aa)) constitute an MGS-like domain.

This sequence belongs to the PurH family.

It catalyses the reaction (6R)-10-formyltetrahydrofolate + 5-amino-1-(5-phospho-beta-D-ribosyl)imidazole-4-carboxamide = 5-formamido-1-(5-phospho-D-ribosyl)imidazole-4-carboxamide + (6S)-5,6,7,8-tetrahydrofolate. The enzyme catalyses IMP + H2O = 5-formamido-1-(5-phospho-D-ribosyl)imidazole-4-carboxamide. The protein operates within purine metabolism; IMP biosynthesis via de novo pathway; 5-formamido-1-(5-phospho-D-ribosyl)imidazole-4-carboxamide from 5-amino-1-(5-phospho-D-ribosyl)imidazole-4-carboxamide (10-formyl THF route): step 1/1. It functions in the pathway purine metabolism; IMP biosynthesis via de novo pathway; IMP from 5-formamido-1-(5-phospho-D-ribosyl)imidazole-4-carboxamide: step 1/1. The chain is Bifunctional purine biosynthesis protein PurH from Xylella fastidiosa (strain 9a5c).